The sequence spans 365 residues: MNILFAGGGTGGHLYPAVAMAERLEQLYPGTTVAFVGTERGIEATEIPRLGYRLHLLDVRGFRRGFSFSDMLNNAGVLLDFVRAVVKAAGIIRAEQPDVVVGTGGFVSGPLLAAAELMGRKTLIQEQNAFPGVTTRFLAAFATEVHLSFEESRKFFRRKQGVFVTGNPARSFTGIDQAEAQSFFGLQPGLPTLLVFGGSRGARSINNAVKTWISGAAGKANIIWQTGSLDDERLRKEVEPSATLWIGPYINDMRMAYGAADLVLCRAGASTLAELTNLGKASVLVPYPYATGNHQFFNAKALVDAGAAELVADADIALDQSRTKVFSILADPELRLRMREACRKEGRPEAALDLAGRIAGLANIK.

UDP-N-acetyl-alpha-D-glucosamine-binding positions include 10–12, N128, R170, S199, I250, and Q295; that span reads TGG.

The protein belongs to the glycosyltransferase 28 family. MurG subfamily.

It localises to the cell inner membrane. The catalysed reaction is di-trans,octa-cis-undecaprenyl diphospho-N-acetyl-alpha-D-muramoyl-L-alanyl-D-glutamyl-meso-2,6-diaminopimeloyl-D-alanyl-D-alanine + UDP-N-acetyl-alpha-D-glucosamine = di-trans,octa-cis-undecaprenyl diphospho-[N-acetyl-alpha-D-glucosaminyl-(1-&gt;4)]-N-acetyl-alpha-D-muramoyl-L-alanyl-D-glutamyl-meso-2,6-diaminopimeloyl-D-alanyl-D-alanine + UDP + H(+). It functions in the pathway cell wall biogenesis; peptidoglycan biosynthesis. Its function is as follows. Cell wall formation. Catalyzes the transfer of a GlcNAc subunit on undecaprenyl-pyrophosphoryl-MurNAc-pentapeptide (lipid intermediate I) to form undecaprenyl-pyrophosphoryl-MurNAc-(pentapeptide)GlcNAc (lipid intermediate II). This is UDP-N-acetylglucosamine--N-acetylmuramyl-(pentapeptide) pyrophosphoryl-undecaprenol N-acetylglucosamine transferase from Prosthecochloris aestuarii (strain DSM 271 / SK 413).